We begin with the raw amino-acid sequence, 480 residues long: RAC-alpha serine/threonine-protein kinase (480 aa).

The region spanning 5 to 108 is the PH domain; that stretch reads AIVKEGWLHK…WTTAIQTVAD (104 aa). Residues Lys14 and Lys20 each carry the N6-acetyllysine modification. 14 to 19 contacts 1D-myo-inositol 1,3,4,5-tetrakisphosphate; that stretch reads KRGEYI. 1D-myo-inositol 1,3,4,5-tetrakisphosphate contacts are provided by residues 23–25 and Asn53; that span reads RPR. Cys60 and Cys77 are disulfide-bonded. Arg86 lines the 1D-myo-inositol 1,3,4,5-tetrakisphosphate pocket. The residue at position 124 (Ser124) is a Phosphoserine. Residue Ser129 is modified to Phosphoserine; alternate. Ser129 is a glycosylation site (O-linked (GlcNAc) serine; alternate). Residues 150-408 form the Protein kinase domain; it reads FEYLKLLGKG…AKEIMQHRFF (259 aa). 156–164 lines the ATP pocket; the sequence is LGKGTFGKV. Tyr176 bears the Phosphotyrosine; by TNK2 mark. ATP is bound at residue Lys179. The Proton acceptor role is filled by Asp274. Lys284 participates in a covalent cross-link: Glycyl lysine isopeptide (Lys-Gly) (interchain with G-Cter in ubiquitin). An intrachain disulfide couples Cys296 to Cys310. O-linked (GlcNAc) threonine glycosylation is present at Thr305. Thr308 is modified (phosphothreonine; by PDPK1). An O-linked (GlcNAc) threonine glycan is attached at Thr312. The region spanning 409 to 480 is the AGC-kinase C-terminal domain; sequence ASIVWQDVYE…QFSYSASATA (72 aa). Thr448 bears the Phosphothreonine mark. Thr450 is modified (phosphothreonine; by MTOR). The segment at 450-480 is disordered; the sequence is TPPDQDDSMEGVDSERRPHFPQFSYSASATA. Ser473 is a glycosylation site (O-linked (GlcNAc) serine; alternate). Ser473 is modified (phosphoserine; by MTOR; alternate). Tyr474 is modified (phosphotyrosine). A Phosphoserine modification is found at Ser477. A Phosphothreonine modification is found at Thr479.

Belongs to the protein kinase superfamily. AGC Ser/Thr protein kinase family. RAC subfamily. Interacts (via the C-terminus) with CCDC88A (via its C-terminus) and THEM4 (via its C-terminus). Interacts with AKTIP. Interacts (via PH domain) with MTCP1, TCL1A and TCL1B. Interacts with TRAF6. Interacts with GRB10; the interaction leads to GRB10 phosphorylation thus promoting YWHAE binding. Interacts with RARA; the interaction phosphorylates RARA and represses its transactivation activity. Interacts with MAP3K5 and TNK2. Interacts with BAD, CLK2, PPP2R5B, STK3 and STK4. Interacts (via PH domain) with SIRT1. Interacts with SRPK2 in a phosphorylation-dependent manner. Interacts with RAF1. Interacts with PKN2 (via C-terminal domain); the interaction occurs with the C-terminus cleavage products of PKN2 in apoptotic cells. Interacts with TRIM13; the interaction ubiquitinates AKT1 leading to its proteasomal degradation. Interacts with and phosphorylated by PDPK1. Interacts with BTBD10. Interacts with KCTD20. Interacts with PA2G4. Interacts with PA2G4. Interacts with KIF14; the interaction is detected in the plasma membrane upon INS stimulation and promotes AKT1 phosphorylation. Interacts with FAM83B; activates the PI3K/AKT signaling cascade. Interacts with WDFY2 (via WD repeats 1-3). Forms a complex with WDFY2 and FOXO1. Interacts with FAM168A. Interacts with SYAP1 (via phosphorylated form and BSD domain); this interaction is enhanced in a mTORC2-mediated manner in response to epidermal growth factor (EGF) stimulation and activates AKT1. Interacts with PKHM3. Interacts with FKBP5/FKBP51; promoting interaction between Akt/AKT1 and PHLPP1, thereby enhancing dephosphorylation and subsequent activation of Akt/AKT1. Interacts with TMEM175; leading to formation of the lysoK(GF) complex. Post-translationally, O-GlcNAcylation at Thr-305 and Thr-312 inhibits activating phosphorylation at Thr-308 via disrupting the interaction between AKT1 and PDPK1. O-GlcNAcylation at Ser-473 also probably interferes with phosphorylation at this site. Phosphorylation on Thr-308, Ser-473 and Tyr-474 is required for full activity. Phosphorylation of the activation loop at Thr-308 by PDPK1/PDK1 is a prerequisite for full activation. Phosphorylation by mTORC2 in response to growth factors plays a key role in AKT1 activation: mTORC2 phosphorylates different sites depending on the context, such as Thr-450, Ser-473, Ser-477 or Thr-479, thereby facilitating subsequent phosphorylation of the activation loop by PDPK1/PDK1. Phosphorylation at Ser-473 by mTORC2 promotes ubiquitination and degradation by the proteasome. Also phosphorylated at Ser-477 and Thr-479 by CDK2, facilitating subsequent phosphorylation of the activation loop by PDPK1/PDK1. Activated TNK2 phosphorylates it on Tyr-176 resulting in its binding to the anionic plasma membrane phospholipid PA. This phosphorylated form localizes to the cell membrane, where it is targeted by PDPK1 and PDPK2 for further phosphorylations on Thr-308 and Ser-473 leading to its activation. Phosphorylated at Thr-308 and Ser-473 by IKBKE and TBK1. Ser-473 phosphorylation is enhanced by interaction with AGAP2 isoform 2 (PIKE-A). Ser-473 phosphorylation is enhanced by signaling through activated FLT3. Ser-473 is dephosphorylated by PHLPP. Dephosphorylated at Thr-308 and Ser-473 by PP2A phosphatase. The phosphorylated form of PPP2R5B is required for bridging AKT1 with PP2A phosphatase. Ser-473 is dephosphorylated by CPPED1, leading to termination of signaling. AIM2 acts as an inhibitor of AKT1 by inhibiting phosphorylation Ser-473: AIM2 acts both by inhibiting the activity of PRKDC/DNA-PK kinase and promoting dephosphorylation by PP2A phosphatase. In terms of processing, ubiquitinated; undergoes both 'Lys-48'- and 'Lys-63'-linked polyubiquitination. TRAF6-induced 'Lys-63'-linked AKT1 ubiquitination is critical for phosphorylation and activation. When ubiquitinated, it translocates to the plasma membrane, where it becomes phosphorylated. When fully phosphorylated and translocated into the nucleus, undergoes 'Lys-48'-polyubiquitination catalyzed by TTC3, leading to its degradation by the proteasome. Ubiquitinated via 'Lys-48'-linked polyubiquitination by ZNRF1, leading to its degradation by the proteasome. Also ubiquitinated by TRIM13 leading to its proteasomal degradation. Phosphorylated, undergoes 'Lys-48'-linked polyubiquitination preferentially at Lys-284 catalyzed by MUL1, leading to its proteasomal degradation. Post-translationally, acetylated on Lys-14 and Lys-20 by the histone acetyltransferases EP300 and KAT2B. Acetylation results in reduced phosphorylation and inhibition of activity. Deacetylated at Lys-14 and Lys-20 by SIRT1. SIRT1-mediated deacetylation relieves the inhibition. Cleavage by caspase-3/CASP3. Cleaved at the caspase-3 consensus site Asp-462 during apoptosis, resulting in down-regulation of the AKT signaling pathway and decreased cell survival.

The protein localises to the cytoplasm. It is found in the nucleus. It localises to the cell membrane. The protein resides in the mitochondrion intermembrane space. The catalysed reaction is L-seryl-[protein] + ATP = O-phospho-L-seryl-[protein] + ADP + H(+). It catalyses the reaction L-threonyl-[protein] + ATP = O-phospho-L-threonyl-[protein] + ADP + H(+). AKT1 is one of 3 closely related serine/threonine-protein kinases (AKT1, AKT2 and AKT3) called the AKT kinase, and which regulate many processes including metabolism, proliferation, cell survival, growth and angiogenesis. This is mediated through serine and/or threonine phosphorylation of a range of downstream substrates. Over 100 substrate candidates have been reported so far, but for most of them, no isoform specificity has been reported. AKT is responsible of the regulation of glucose uptake by mediating insulin-induced translocation of the SLC2A4/GLUT4 glucose transporter to the cell surface. Phosphorylation of PTPN1 at 'Ser-50' negatively modulates its phosphatase activity preventing dephosphorylation of the insulin receptor and the attenuation of insulin signaling. Phosphorylation of TBC1D4 triggers the binding of this effector to inhibitory 14-3-3 proteins, which is required for insulin-stimulated glucose transport. AKT also regulates the storage of glucose in the form of glycogen by phosphorylating GSK3A at 'Ser-21' and GSK3B at 'Ser-9', resulting in inhibition of its kinase activity. Phosphorylation of GSK3 isoforms by AKT is also thought to be one mechanism by which cell proliferation is driven. AKT also regulates cell survival via the phosphorylation of MAP3K5 (apoptosis signal-related kinase). Phosphorylation of 'Ser-83' decreases MAP3K5 kinase activity stimulated by oxidative stress and thereby prevents apoptosis. AKT mediates insulin-stimulated protein synthesis by phosphorylating TSC2 at 'Ser-939' and 'Thr-1462', thereby activating the mTORC1 signaling pathway, and leading to both phosphorylation of 4E-BP1 and in activation of RPS6KB1. Also regulates the mTORC1 signaling pathway by catalyzing phosphorylation of CASTOR1 and DEPDC5. AKT plays a role as key modulator of the AKT-mTOR signaling pathway controlling the tempo of the process of newborn neurons integration during adult neurogenesis, including correct neuron positioning, dendritic development and synapse formation. Part of a positive feedback loop of mTORC2 signaling by mediating phosphorylation of MAPKAP1/SIN1, promoting mTORC2 activation. AKT is involved in the phosphorylation of members of the FOXO factors (Forkhead family of transcription factors), leading to binding of 14-3-3 proteins and cytoplasmic localization. In particular, FOXO1 is phosphorylated at 'Thr-24', 'Ser-256' and 'Ser-319'. FOXO3 and FOXO4 are phosphorylated on equivalent sites. AKT has an important role in the regulation of NF-kappa-B-dependent gene transcription and positively regulates the activity of CREB1 (cyclic AMP (cAMP)-response element binding protein). The phosphorylation of CREB1 induces the binding of accessory proteins that are necessary for the transcription of pro-survival genes such as BCL2 and MCL1. AKT phosphorylates 'Ser-454' on ATP citrate lyase (ACLY), thereby potentially regulating ACLY activity and fatty acid synthesis. Activates the 3B isoform of cyclic nucleotide phosphodiesterase (PDE3B) via phosphorylation of 'Ser-273', resulting in reduced cyclic AMP levels and inhibition of lipolysis. Phosphorylates PIKFYVE on 'Ser-318', which results in increased PI(3)P-5 activity. The Rho GTPase-activating protein DLC1 is another substrate and its phosphorylation is implicated in the regulation cell proliferation and cell growth. Signals downstream of phosphatidylinositol 3-kinase (PI(3)K) to mediate the effects of various growth factors such as platelet-derived growth factor (PDGF), epidermal growth factor (EGF), insulin and insulin-like growth factor 1 (IGF1). AKT mediates the antiapoptotic effects of IGF1. Essential for the SPATA13-mediated regulation of cell migration and adhesion assembly and disassembly. May be involved in the regulation of the placental development. Phosphorylates STK4/MST1 at 'Thr-120' and 'Thr-387' leading to inhibition of its: kinase activity, nuclear translocation, autophosphorylation and ability to phosphorylate FOXO3. Phosphorylates STK3/MST2 at 'Thr-117' and 'Thr-384' leading to inhibition of its: cleavage, kinase activity, autophosphorylation at Thr-180, binding to RASSF1 and nuclear translocation. Phosphorylates SRPK2 and enhances its kinase activity towards SRSF2 and ACIN1 and promotes its nuclear translocation. Phosphorylates RAF1 at 'Ser-259' and negatively regulates its activity. Phosphorylation of BAD stimulates its pro-apoptotic activity. Phosphorylates KAT6A at 'Thr-369' and this phosphorylation inhibits the interaction of KAT6A with PML and negatively regulates its acetylation activity towards p53/TP53. Phosphorylates palladin (PALLD), modulating cytoskeletal organization and cell motility. Phosphorylates prohibitin (PHB), playing an important role in cell metabolism and proliferation. Phosphorylates CDKN1A, for which phosphorylation at 'Thr-145' induces its release from CDK2 and cytoplasmic relocalization. These recent findings indicate that the AKT1 isoform has a more specific role in cell motility and proliferation. Phosphorylates CLK2 thereby controlling cell survival to ionizing radiation. Phosphorylates PCK1 at 'Ser-90', reducing the binding affinity of PCK1 to oxaloacetate and changing PCK1 into an atypical protein kinase activity using GTP as donor. Also acts as an activator of TMEM175 potassium channel activity in response to growth factors: forms the lysoK(GF) complex together with TMEM175 and acts by promoting TMEM175 channel activation, independently of its protein kinase activity. Acts as a negative regulator of the cGAS-STING pathway by mediating phosphorylation of CGAS during mitosis, leading to its inhibition. Acts as a regulator of mitochondrial calcium uptake by mediating phosphorylation of MICU1 in the mitochondrial intermembrane space, impairing MICU1 maturation. Acts as an inhibitor of tRNA methylation by mediating phosphorylation of the N-terminus of METTL1, thereby inhibiting METTL1 methyltransferase activity. In response to LPAR1 receptor pathway activation, phosphorylates Rabin8/RAB3IP which alters its activity and phosphorylates WDR44 which induces WDR44 binding to Rab11, thereby switching Rab11 vesicular function from preciliary trafficking to endocytic recycling. The polypeptide is RAC-alpha serine/threonine-protein kinase (AKT1) (Bos taurus (Bovine)).